The primary structure comprises 340 residues: Extracellular matrix protein-binding protein emp (340 aa).

Positions 1–26 (MKKKLLVLTMSTLFATQLINSNHAKA) are cleaved as a signal peptide.

The protein localises to the cell surface. Functionally, adhesin that binds to the host cell extracellular matrix proteins fibronectin, fibrinogen, collagen, and vitronectin. In Staphylococcus aureus (strain Mu50 / ATCC 700699), this protein is Extracellular matrix protein-binding protein emp (emp).